Here is a 345-residue protein sequence, read N- to C-terminus: S-adenosylmethionine:tRNA ribosyltransferase-isomerase (345 aa).

The protein belongs to the QueA family. In terms of assembly, monomer.

Its subcellular location is the cytoplasm. The catalysed reaction is 7-aminomethyl-7-carbaguanosine(34) in tRNA + S-adenosyl-L-methionine = epoxyqueuosine(34) in tRNA + adenine + L-methionine + 2 H(+). Its pathway is tRNA modification; tRNA-queuosine biosynthesis. Its function is as follows. Transfers and isomerizes the ribose moiety from AdoMet to the 7-aminomethyl group of 7-deazaguanine (preQ1-tRNA) to give epoxyqueuosine (oQ-tRNA). This is S-adenosylmethionine:tRNA ribosyltransferase-isomerase from Acidiphilium cryptum (strain JF-5).